A 1069-amino-acid polypeptide reads, in one-letter code: Calcium-transporting ATPase 10, plasma membrane-type (1069 aa).

The tract at residues 1-29 (MSGQFNNSPRGEDKDVEAGTSSFTEYEDS) is disordered. S2 is subject to N-acetylserine. Topologically, residues 2–180 (SGQFNNSPRG…NTYPQKKGRS (179 aa)) are cytoplasmic. Positions 42–53 (ERLRRWRQAALV) are interaction with calmodulin. The helical transmembrane segment at 181-201 (FWRFVWEASQDLTLIILIVAA) threads the bilayer. Residues 202–219 (VASLALGIKTEGIEKGWY) are Lumenal-facing. A helical transmembrane segment spans residues 220–240 (DGISIAFAVLLVIVVTATSDY). The Cytoplasmic segment spans residues 241–369 (RQSLQFQNLN…GGETPLQVRL (129 aa)). A helical transmembrane segment spans residues 370–389 (NGVATFIGIVGLTVAGVVLF). The Lumenal segment spans residues 390-426 (VLVVRYFTGHTKNEQGGPQFIGGKTKFEHVLDDLVEI). Residues 427-444 (FTVAVTIVVVAVPEGLPL) traverse the membrane as a helical segment. Topologically, residues 445-844 (AVTLTLAYSM…RWGRSVYANI (400 aa)) are cytoplasmic. D482 serves as the catalytic 4-aspartylphosphate intermediate. 2 residues coordinate Mg(2+): D789 and D793. Residues 845–863 (QKFIQFQLTVNVAALVINV) traverse the membrane as a helical segment. Over 864–874 (VAAISAGEVPL) the chain is Lumenal. A helical transmembrane segment spans residues 875–895 (TAVQLLWVNLIMDTLGALALA). Over 896-915 (TEPPTDHLMDRAPVGRREPL) the chain is Cytoplasmic. The chain crosses the membrane as a helical span at residues 916–938 (ITNIMWRNLFIQAMYQVTVLLIL). Topologically, residues 939-951 (NFRGISILHLKSK) are lumenal. The helical transmembrane segment at 952-973 (PNAERVKNTVIFNAFVICQVFN) threads the bilayer. The Cytoplasmic portion of the chain corresponds to 974–991 (EFNARKPDEINIFRGVLR). Residues 992–1013 (NHLFVGIISITIVLQVVIVEFL) form a helical membrane-spanning segment. At 1014–1023 (GTFASTTKLD) the chain is on the lumenal side. A helical membrane pass occupies residues 1024 to 1045 (WEMWLVCIGIGSISWPLAVIGK). At 1046–1069 (LIPVPETPVSQYFRINRWRRNSSG) the chain is on the cytoplasmic side.

The protein belongs to the cation transport ATPase (P-type) (TC 3.A.3) family. Type IIB subfamily.

The protein localises to the membrane. The catalysed reaction is Ca(2+)(in) + ATP + H2O = Ca(2+)(out) + ADP + phosphate + H(+). Activated by calmodulin. Functionally, this magnesium-dependent enzyme catalyzes the hydrolysis of ATP coupled with the translocation of calcium from the cytosol into the endoplasmic reticulum. In Arabidopsis thaliana (Mouse-ear cress), this protein is Calcium-transporting ATPase 10, plasma membrane-type (ACA10).